We begin with the raw amino-acid sequence, 223 residues long: Putative germin-like protein subfamily 1 member 12 (223 aa).

Positions 1-24 are cleaved as a signal peptide; it reads MNMKNLYLAILYLLAASTLPFAIA. C34 and C51 are oxidised to a cystine. The Cupin type-1 domain maps to 65–216; the sequence is SGLDKARTTE…AFQLDPKVII (152 aa). A glycan (N-linked (GlcNAc...) asparagine) is linked at N81. Mn(2+)-binding residues include H114, H116, and E121. N145 carries N-linked (GlcNAc...) asparagine glycosylation. H162 contacts Mn(2+).

Belongs to the germin family. In terms of assembly, oligomer (believed to be a pentamer but probably hexamer).

Its subcellular location is the secreted. The protein localises to the extracellular space. It is found in the apoplast. May play a role in plant defense. Probably has no oxalate oxidase activity even if the active site is conserved. This Arabidopsis thaliana (Mouse-ear cress) protein is Putative germin-like protein subfamily 1 member 12.